A 276-amino-acid chain; its full sequence is Diaminopimelate epimerase (276 aa).

3 residues coordinate substrate: asparagine 13, glutamine 46, and asparagine 66. Cysteine 75 serves as the catalytic Proton donor. Substrate-binding positions include 76-77 (GN), asparagine 159, asparagine 192, and 210-211 (ER). The Proton acceptor role is filled by cysteine 219. 220-221 (GT) is a binding site for substrate.

It belongs to the diaminopimelate epimerase family. Homodimer.

The protein resides in the cytoplasm. The enzyme catalyses (2S,6S)-2,6-diaminopimelate = meso-2,6-diaminopimelate. Its pathway is amino-acid biosynthesis; L-lysine biosynthesis via DAP pathway; DL-2,6-diaminopimelate from LL-2,6-diaminopimelate: step 1/1. In terms of biological role, catalyzes the stereoinversion of LL-2,6-diaminopimelate (L,L-DAP) to meso-diaminopimelate (meso-DAP), a precursor of L-lysine and an essential component of the bacterial peptidoglycan. This chain is Diaminopimelate epimerase, found in Pseudomonas fluorescens.